Reading from the N-terminus, the 89-residue chain is Large ribosomal subunit protein bL27 (89 aa).

A disordered region spans residues methionine 1–leucine 21.

Belongs to the bacterial ribosomal protein bL27 family.

This is Large ribosomal subunit protein bL27 from Granulibacter bethesdensis (strain ATCC BAA-1260 / CGDNIH1).